Here is a 156-residue protein sequence, read N- to C-terminus: ATP synthase subunit b (156 aa).

The chain crosses the membrane as a helical span at residues 7–27 (LIGQTVAFIIFVWFCMKFVWP).

The protein belongs to the ATPase B chain family. In terms of assembly, F-type ATPases have 2 components, F(1) - the catalytic core - and F(0) - the membrane proton channel. F(1) has five subunits: alpha(3), beta(3), gamma(1), delta(1), epsilon(1). F(0) has three main subunits: a(1), b(2) and c(10-14). The alpha and beta chains form an alternating ring which encloses part of the gamma chain. F(1) is attached to F(0) by a central stalk formed by the gamma and epsilon chains, while a peripheral stalk is formed by the delta and b chains.

It localises to the cell inner membrane. Functionally, f(1)F(0) ATP synthase produces ATP from ADP in the presence of a proton or sodium gradient. F-type ATPases consist of two structural domains, F(1) containing the extramembraneous catalytic core and F(0) containing the membrane proton channel, linked together by a central stalk and a peripheral stalk. During catalysis, ATP synthesis in the catalytic domain of F(1) is coupled via a rotary mechanism of the central stalk subunits to proton translocation. Component of the F(0) channel, it forms part of the peripheral stalk, linking F(1) to F(0). This Shewanella baltica (strain OS185) protein is ATP synthase subunit b.